A 346-amino-acid chain; its full sequence is 4-hydroxy-2-oxovalerate aldolase (346 aa).

In terms of domain architecture, Pyruvate carboxyltransferase spans 8–260; it reads VTLHDMSLRD…ETGIDLYKIM (253 aa). Residue 16-17 participates in substrate binding; it reads RD. Asp17 is a binding site for Mn(2+). The active-site Proton acceptor is the His20. Positions 170 and 199 each coordinate substrate. His199 and His201 together coordinate Mn(2+). Substrate is bound at residue Tyr290.

This sequence belongs to the 4-hydroxy-2-oxovalerate aldolase family.

The catalysed reaction is (S)-4-hydroxy-2-oxopentanoate = acetaldehyde + pyruvate. In Stutzerimonas stutzeri (Pseudomonas stutzeri), this protein is 4-hydroxy-2-oxovalerate aldolase (nahM).